The following is a 187-amino-acid chain: UPF0301 protein ECA3925 (187 aa).

The protein belongs to the UPF0301 (AlgH) family.

The polypeptide is UPF0301 protein ECA3925 (Pectobacterium atrosepticum (strain SCRI 1043 / ATCC BAA-672) (Erwinia carotovora subsp. atroseptica)).